Here is a 938-residue protein sequence, read N- to C-terminus: Isoleucine--tRNA ligase (938 aa).

Residues 58–68 carry the 'HIGH' region motif; sequence PYANGSIHIGH. The residue at position 183 (lysine 183) is an N6-acetyllysine. Glutamate 561 is an L-isoleucyl-5'-AMP binding site. The 'KMSKS' region motif lies at 602 to 606; sequence KMSKS. Lysine 605 is an ATP binding site. Zn(2+) is bound by residues cysteine 901, cysteine 904, cysteine 921, and cysteine 924.

The protein belongs to the class-I aminoacyl-tRNA synthetase family. IleS type 1 subfamily. Monomer. It depends on Zn(2+) as a cofactor.

The protein localises to the cytoplasm. The enzyme catalyses tRNA(Ile) + L-isoleucine + ATP = L-isoleucyl-tRNA(Ile) + AMP + diphosphate. Functionally, catalyzes the attachment of isoleucine to tRNA(Ile). As IleRS can inadvertently accommodate and process structurally similar amino acids such as valine, to avoid such errors it has two additional distinct tRNA(Ile)-dependent editing activities. One activity is designated as 'pretransfer' editing and involves the hydrolysis of activated Val-AMP. The other activity is designated 'posttransfer' editing and involves deacylation of mischarged Val-tRNA(Ile). This chain is Isoleucine--tRNA ligase, found in Escherichia coli O17:K52:H18 (strain UMN026 / ExPEC).